The chain runs to 455 residues: Retinoic acid receptor beta (455 aa).

The tract at residues 1–87 (MTTSSRTCPV…PLPPPRVYKP (87 aa)) is modulating. Residues 45–78 (QSHPPTSGCSTPSPASVETQSTSSEELVPSPPSP) form a disordered region. Polar residues predominate over residues 47 to 66 (HPPTSGCSTPSPASVETQST). NR C4-type zinc fingers lie at residues 88 to 108 (CFVCQDKSSGYHYGVSACEGC) and 124 to 148 (CHRDKNCVINKVTRNRCQYCRLQKC). Residues 88 to 153 (CFVCQDKSSG…RLQKCFEVGM (66 aa)) constitute a DNA-binding region (nuclear receptor). Residues 154-182 (SKESVRNDRNKKKKEPTKQESTENYEMTA) are hinge. One can recognise an NR LBD domain in the interval 183–417 (ELDDLTEKIR…PLIQEMLENS (235 aa)). The segment at 416-455 (NSEGHEPLTPTSNGNTAEHSPSISPSSVDNSSVSQSPMVQ) is disordered. Over residues 424–434 (TPTSNGNTAEH) the composition is skewed to polar residues. Residues 435 to 455 (SPSISPSSVDNSSVSQSPMVQ) show a composition bias toward low complexity.

It belongs to the nuclear hormone receptor family. NR1 subfamily. In terms of assembly, heterodimer; with a RXR molecule. Binds DNA preferentially as a RAR/RXR heterodimer. Both isoforms expressed in heart, lung, kidney, liver, brain, lung and testis. Isoform Beta-1 is highly expressed in testes and brain. Levels increase during testes maturation. Isoform beta-2 is predominant in heart, kidney and lung.

It is found in the nucleus. In terms of biological role, receptor for retinoic acid. Retinoic acid receptors bind as heterodimers to their target response elements in response to their ligands, all-trans or 9-cis retinoic acid, and regulate gene expression in various biological processes. The RAR/RXR heterodimers bind to the retinoic acid response elements (RARE) composed of tandem 5'-AGGTCA-3' sites known as DR1-DR5. May be required for Sertoli cell differentiation and spermatogenesis. In Coturnix japonica (Japanese quail), this protein is Retinoic acid receptor beta (RARB).